A 179-amino-acid polypeptide reads, in one-letter code: Large ribosomal subunit protein uL5 (179 aa).

The protein belongs to the universal ribosomal protein uL5 family. Part of the 50S ribosomal subunit; part of the 5S rRNA/L5/L18/L25 subcomplex. Contacts the 5S rRNA and the P site tRNA. Forms a bridge to the 30S subunit in the 70S ribosome.

Its function is as follows. This is one of the proteins that bind and probably mediate the attachment of the 5S RNA into the large ribosomal subunit, where it forms part of the central protuberance. In the 70S ribosome it contacts protein S13 of the 30S subunit (bridge B1b), connecting the 2 subunits; this bridge is implicated in subunit movement. Contacts the P site tRNA; the 5S rRNA and some of its associated proteins might help stabilize positioning of ribosome-bound tRNAs. The chain is Large ribosomal subunit protein uL5 from Lawsonia intracellularis (strain PHE/MN1-00).